The primary structure comprises 143 residues: Large ribosomal subunit protein uL13 (143 aa).

Belongs to the universal ribosomal protein uL13 family. In terms of assembly, part of the 50S ribosomal subunit.

In terms of biological role, this protein is one of the early assembly proteins of the 50S ribosomal subunit, although it is not seen to bind rRNA by itself. It is important during the early stages of 50S assembly. This is Large ribosomal subunit protein uL13 from Neisseria meningitidis serogroup C (strain 053442).